The chain runs to 131 residues: Monothiol glutaredoxin-S6 (131 aa).

The region spanning 31–131 (SAFVQNAIYS…KLLGNSQSQR (101 aa)) is the Glutaredoxin domain. Cysteine 51 contributes to the [2Fe-2S] cluster binding site.

Belongs to the glutaredoxin family. CPYC subfamily.

It localises to the cytoplasm. Its function is as follows. May only reduce GSH-thiol disulfides, but not protein disulfides. The chain is Monothiol glutaredoxin-S6 (GRXS6) from Oryza sativa subsp. japonica (Rice).